Reading from the N-terminus, the 537-residue chain is Glucan 1,6-alpha-glucosidase (537 aa).

The active-site Nucleophile is the aspartate 194. Glutamate 236 functions as the Proton donor in the catalytic mechanism.

This sequence belongs to the glycosyl hydrolase 13 family.

The protein resides in the cytoplasm. The catalysed reaction is Hydrolysis of (1-&gt;6)-alpha-D-glucosidic linkages in (1-&gt;6)-alpha-D-glucans and derived oligosaccharides.. The physiological substrates may be short isomaltosaccharides. The protein is Glucan 1,6-alpha-glucosidase (dexB) of Streptococcus dysgalactiae subsp. equisimilis (Streptococcus equisimilis).